Consider the following 911-residue polypeptide: Bifunctional aspartokinase/homoserine dehydrogenase 1, chloroplastic (911 aa).

Residues 1 to 82 constitute a chloroplast transit peptide; the sequence is MPVVSLAKVV…VENGHLPKGD (82 aa). The tract at residues 83–331 is aspartokinase; sequence SWAVHKFGGT…VSEAVVLKTL (249 aa). The segment at 332-557 is interface; it reads SYQEAWEMSY…LSRTTLAVGI (226 aa). 2 consecutive ACT domains span residues 407 to 482 and 488 to 565; these read VEGT…IIPN and AVGQ…LIGG. The interval 558 to 911 is homoserine dehydrogenase; the sequence is IGPGLIGGTL…RLAFYLGAPS (354 aa). NAD(+)-binding residues include Ile563 and Thr644. Residues Ile563, Thr644, and Lys668 each contribute to the NADP(+) site. The NADPH site is built by Ile563, Thr644, and Lys668. Na(+) contacts are provided by Glu695, Val698, Ala700, and Leu702. The NADP(+) site is built by Gly753 and Glu756. L-homoserine contacts are provided by Glu756 and Asp767. Residue Lys771 is the Proton donor of the active site. Gly888 contributes to the NAD(+) binding site. Residue Gly888 coordinates NADP(+). Position 888 (Gly888) interacts with NADPH.

This sequence in the N-terminal section; belongs to the aspartokinase family. It in the C-terminal section; belongs to the homoserine dehydrogenase family. Homo- or heterodimer. A metal cation serves as cofactor.

It localises to the plastid. Its subcellular location is the chloroplast. The enzyme catalyses L-homoserine + NADP(+) = L-aspartate 4-semialdehyde + NADPH + H(+). It catalyses the reaction L-homoserine + NAD(+) = L-aspartate 4-semialdehyde + NADH + H(+). It carries out the reaction L-aspartate + ATP = 4-phospho-L-aspartate + ADP. Its pathway is amino-acid biosynthesis; L-lysine biosynthesis via DAP pathway; (S)-tetrahydrodipicolinate from L-aspartate: step 1/4. The protein operates within amino-acid biosynthesis; L-methionine biosynthesis via de novo pathway; L-homoserine from L-aspartate: step 1/3. It functions in the pathway amino-acid biosynthesis; L-methionine biosynthesis via de novo pathway; L-homoserine from L-aspartate: step 3/3. It participates in amino-acid biosynthesis; L-threonine biosynthesis; L-threonine from L-aspartate: step 1/5. Its pathway is amino-acid biosynthesis; L-threonine biosynthesis; L-threonine from L-aspartate: step 3/5. Inhibition of aspartate kinase activity by threonine and leucine and 3-fold activation by cysteine, isoleucine, valine, serine and alanine at 2.5 mM. Partial inhibition of homoserine dehydrogenase activity by threonine and cysteine (14% of activity remaining at saturation with either amino acid). No synergy between the effectors for both activation or inhibition. Functionally, bifunctional aspartate kinase and homoserine dehydrogenase that catalyzes the first and the third steps toward the synthesis of lysine, methionine and threonine from aspartate. This is Bifunctional aspartokinase/homoserine dehydrogenase 1, chloroplastic from Arabidopsis thaliana (Mouse-ear cress).